A 358-amino-acid chain; its full sequence is G-protein coupled receptor 62 (358 aa).

Topologically, residues 1 to 17 are extracellular; sequence MANGSGLSVTELAGSVG. Asn3 carries N-linked (GlcNAc...) asparagine glycosylation. A helical transmembrane segment spans residues 18–38; it reads FILAVLVEVGAVLGNGTLLVV. Over 39 to 53 the chain is Cytoplasmic; it reads VLRTPDLQDAFYLAH. Residues 54-74 form a helical membrane-spanning segment; that stretch reads LCVVDLLAAASIMPLGLLAAP. Over 75–89 the chain is Extracellular; it reads PGLGTVPLDPSSCRA. Residues 90–110 form a helical membrane-spanning segment; sequence ARFLSAALLPACTLGVAALGL. Residues 111–128 lie on the Cytoplasmic side of the membrane; it reads ARYRLIVHPLRPGARPAP. Residues 129–149 form a helical membrane-spanning segment; the sequence is ALVLTAVWSAAALLGALSLLG. Residues 150 to 176 lie on the Extracellular side of the membrane; that stretch reads PPPAPPPAPARCSVLAGGLGPFRPLWA. A helical transmembrane segment spans residues 177–197; sequence MLAFALPALLLLAAYGSIFLV. Residues 198–234 are Cytoplasmic-facing; sequence ARRAALRPPRGTRPRSDSLDSRLSFLPPLRPRLLGGK. The chain crosses the membrane as a helical span at residues 235 to 255; the sequence is AALAPALAVGQFAACWLPYGC. Residues 256–268 lie on the Extracellular side of the membrane; the sequence is ACLAPAARAAAAE. Residues 269-289 form a helical membrane-spanning segment; that stretch reads ATVTWVAYSAFAAHPFLYGLL. Residues 290–358 are Cytoplasmic-facing; sequence QRPVRLALGR…RQTPSVSEAT (69 aa). Residues 334 to 358 form a disordered region; it reads VLGPSEAPEQARELARQTPSVSEAT.

This sequence belongs to the G-protein coupled receptor 1 family. Homodimer. Forms heterodimer with MTNR1B. Interacts with ARRB1 and ARRB2 in a spontaneous and agonist-independent manner; leading to the internalization of GPR62 in the endosomal compartment. As to expression, expressed in the brain and testes. Expressed widely, in the brain, including the cerebral cortex, cerebellum, hippocampus,thalamus and pituitary gland. In the testes, expressed specifically in the germ cells.

The protein localises to the cell membrane. The protein resides in the endosome membrane. In terms of biological role, orphan G-protein coupled receptor. Constitutively activates the G(q/11)/inositol phosphate and the G(s)-alpha/cAMP signaling pathways. Has spontaneous activity for beta-arrestin recruitment. Shows a reciprocal regulatory interaction with the melatonin receptor MTNR1B most likely through receptor heteromerization. In Mus musculus (Mouse), this protein is G-protein coupled receptor 62 (Gpr62).